A 340-amino-acid polypeptide reads, in one-letter code: GTP 3',8-cyclase (340 aa).

Residues 8–227 (KLGRPIRDLR…DMIESHFDIE (220 aa)) enclose the Radical SAM core domain. Arg17 serves as a coordination point for GTP. Positions 24 and 28 each coordinate [4Fe-4S] cluster. S-adenosyl-L-methionine is bound at residue Tyr30. [4Fe-4S] cluster is bound at residue Cys31. Arg71 is a binding site for GTP. Gly75 is an S-adenosyl-L-methionine binding site. Thr102 lines the GTP pocket. S-adenosyl-L-methionine is bound at residue Ser126. GTP is bound at residue Lys163. Met197 provides a ligand contact to S-adenosyl-L-methionine. Cys261 and Cys264 together coordinate [4Fe-4S] cluster. 266 to 268 (RAR) lines the GTP pocket. Cys278 lines the [4Fe-4S] cluster pocket.

It belongs to the radical SAM superfamily. MoaA family. In terms of assembly, monomer and homodimer. [4Fe-4S] cluster serves as cofactor.

The catalysed reaction is GTP + AH2 + S-adenosyl-L-methionine = (8S)-3',8-cyclo-7,8-dihydroguanosine 5'-triphosphate + 5'-deoxyadenosine + L-methionine + A + H(+). It participates in cofactor biosynthesis; molybdopterin biosynthesis. Catalyzes the cyclization of GTP to (8S)-3',8-cyclo-7,8-dihydroguanosine 5'-triphosphate. This is GTP 3',8-cyclase from Staphylococcus haemolyticus (strain JCSC1435).